A 246-amino-acid chain; its full sequence is TLC domain-containing protein 2 (246 aa).

6 consecutive transmembrane segments (helical) span residues 5-25 (SVIL…YGLG), 43-63 (ISTS…CFCM), 79-99 (SHAL…DMVI), 107-127 (WELL…VLTC), 128-148 (RYVG…FLHL), and 199-219 (FSYT…IVLF). Positions 35 to 231 (RNAWKWNNIS…LMRSDFMKAS (197 aa)) constitute a TLC domain.

Belongs to the TLCD family.

It localises to the cell membrane. In terms of biological role, regulates the composition and fluidity of the plasma membrane. Inhibits the incorporation of membrane-fluidizing phospholipids containing omega-3 long-chain polyunsaturated fatty acids (LCPUFA) and thereby promotes membrane rigidity. Does not appear to have any effect on LCPUFA synthesis. This is TLC domain-containing protein 2 (tlcd2) from Danio rerio (Zebrafish).